Reading from the N-terminus, the 224-residue chain is UPF0758 protein PSPPH_0210 (224 aa).

An MPN domain is found at 102–224; it reads ALENPTQVRN…PLSMVERGLM (123 aa). Zn(2+)-binding residues include His-173, His-175, and Asp-186. The short motif at 173–186 is the JAMM motif element; it reads HNHPSGITTPSRSD.

This sequence belongs to the UPF0758 family.

The polypeptide is UPF0758 protein PSPPH_0210 (Pseudomonas savastanoi pv. phaseolicola (strain 1448A / Race 6) (Pseudomonas syringae pv. phaseolicola (strain 1448A / Race 6))).